A 208-amino-acid polypeptide reads, in one-letter code: Imidazoleglycerol-phosphate dehydratase (208 aa).

The segment at 1 to 20 (MSRRATVKAPRAGAAARRGA) is disordered. Residues 7 to 19 (VKAPRAGAAARRG) are compositionally biased toward low complexity.

Belongs to the imidazoleglycerol-phosphate dehydratase family.

The protein localises to the cytoplasm. It carries out the reaction D-erythro-1-(imidazol-4-yl)glycerol 3-phosphate = 3-(imidazol-4-yl)-2-oxopropyl phosphate + H2O. It functions in the pathway amino-acid biosynthesis; L-histidine biosynthesis; L-histidine from 5-phospho-alpha-D-ribose 1-diphosphate: step 6/9. The chain is Imidazoleglycerol-phosphate dehydratase from Anaeromyxobacter sp. (strain K).